A 690-amino-acid polypeptide reads, in one-letter code: Methionine--tRNA ligase (690 aa).

The 'HIGH' region motif lies at 12–22 (PYANGPLHLGH). Zn(2+) is bound by residues C144, C147, C157, and C160. A 'KMSKS' region motif is present at residues 333–337 (QFSKS). K336 contacts ATP. The 98-residue stretch at 535 to 632 (KKINIDLMVG…VNADDGSRMK (98 aa)) folds into the tRNA-binding domain.

This sequence belongs to the class-I aminoacyl-tRNA synthetase family. MetG type 1 subfamily. As to quaternary structure, homodimer. Requires Zn(2+) as cofactor.

Its subcellular location is the cytoplasm. The enzyme catalyses tRNA(Met) + L-methionine + ATP = L-methionyl-tRNA(Met) + AMP + diphosphate. Is required not only for elongation of protein synthesis but also for the initiation of all mRNA translation through initiator tRNA(fMet) aminoacylation. The chain is Methionine--tRNA ligase from Picrophilus torridus (strain ATCC 700027 / DSM 9790 / JCM 10055 / NBRC 100828 / KAW 2/3).